Reading from the N-terminus, the 1502-residue chain is G patch domain-containing protein 8 (1502 aa).

The G-patch domain maps to 40–86 (SDNIGHRLLQKHGWKLGQGLGKSLQGRTDPIPIVVKYDVMGMGRMEM). Residues 89-124 (DYAEDATERRRVLEVEKEDTEELRQKYKDYVDKEKA) adopt a coiled-coil conformation. The C2H2-type zinc finger occupies 136–160 (FYCELCDKQYQKHQEFDNHINSYDH). The segment at 172–251 (REFARNVSSR…GATASCGLGS (80 aa)) is disordered. Over residues 182-206 (SRKDEKKQEKALRRLHELAEQRKQA) the composition is skewed to basic and acidic residues. The span at 223–233 (VDEEGGEDDKD) shows a compositional bias: acidic residues. K311 is covalently cross-linked (Glycyl lysine isopeptide (Lys-Gly) (interchain with G-Cter in SUMO2)). 2 stretches are compositionally biased toward basic and acidic residues: residues 323–339 (AEEG…EKSS) and 424–436 (NTTH…ESKK). Disordered stretches follow at residues 323–391 (AEEG…ATEP) and 419–541 (QMDG…FPVL). A compositionally biased stretch (polar residues) spans 459-472 (SEVSEQPKETSMTE). An N6-acetyllysine modification is found at K479. Position 491 is a phosphoserine (S491). Over residues 491 to 519 (SDQSLESHSQKVSETQMCESNSSKETSLA) the composition is skewed to polar residues. K577 is covalently cross-linked (Glycyl lysine isopeptide (Lys-Gly) (interchain with G-Cter in SUMO2)). 2 stretches are compositionally biased toward basic and acidic residues: residues 579–623 (SRNK…EKIV) and 653–670 (SETE…ERSG). The tract at residues 579 to 1301 (SRNKDARTKG…ESTDGAEDAS (723 aa)) is disordered. S653 is subject to Phosphoserine. Over residues 671 to 692 (KSHRHKKKKKHKKSSKHKRKHK) the composition is skewed to basic residues. Positions 693 to 707 (ADTEEKSSKAESGEK) are enriched in basic and acidic residues. The span at 708-720 (SKKRKKRKRKKNK) shows a compositional bias: basic residues. A compositionally biased stretch (pro residues) spans 733-743 (PEPPGSGSPAP). 3 positions are modified to phosphoserine: S738, S740, and S758. Over residues 750–772 (AQDDSQRRSLPAEEGSSGKKDEG) the composition is skewed to basic and acidic residues. Composition is skewed to basic residues over residues 799–809 (AGTKRSSRSSH) and 852–867 (SRSR…RSSR). Positions 868–896 (RSYSSSSDASSDQSCYSRQRSYSDDSYSD) are enriched in low complexity. Phosphoserine occurs at positions 911 and 914. The segment covering 919-928 (SKHRSKRHKY) has biased composition (basic residues). S981, S1009, S1014, S1033, and S1035 each carry phosphoserine. The segment covering 1010 to 1027 (WGHESPEERHSGRRDFIR) has biased composition (basic and acidic residues). A compositionally biased stretch (basic and acidic residues) spans 1042 to 1059 (GRGEGPGKKDDGRGDDSK). At S1081 the chain carries Phosphoserine. 2 stretches are compositionally biased toward basic and acidic residues: residues 1093-1108 (LLEK…KPSV) and 1159-1171 (KKCE…RGEE). A Glycyl lysine isopeptide (Lys-Gly) (interchain with G-Cter in SUMO2) cross-link involves residue K1105. At S1107 the chain carries Phosphoserine. A Phosphoserine modification is found at S1175.

In Homo sapiens (Human), this protein is G patch domain-containing protein 8 (GPATCH8).